We begin with the raw amino-acid sequence, 193 residues long: Ribosome maturation factor RimM (193 aa).

Positions 112 to 193 (VDEYYWIDLI…CITVDWGLDF (82 aa)) constitute a PRC barrel domain.

The protein belongs to the RimM family. As to quaternary structure, binds ribosomal protein uS19.

It localises to the cytoplasm. Functionally, an accessory protein needed during the final step in the assembly of 30S ribosomal subunit, possibly for assembly of the head region. Essential for efficient processing of 16S rRNA. May be needed both before and after RbfA during the maturation of 16S rRNA. It has affinity for free ribosomal 30S subunits but not for 70S ribosomes. In Methylibium petroleiphilum (strain ATCC BAA-1232 / LMG 22953 / PM1), this protein is Ribosome maturation factor RimM.